The chain runs to 157 residues: Lipoprotein signal peptidase (157 aa).

Transmembrane regions (helical) follow at residues 10-30 (LIFI…KYAI), 58-78 (FLEG…FIFL), and 84-104 (LFKN…SNVL). Active-site residues include Asp114 and Asp131. The helical transmembrane segment at 122-142 (FDFAIFNFADVMIDVGVGVLL) threads the bilayer.

This sequence belongs to the peptidase A8 family.

The protein localises to the cell inner membrane. It catalyses the reaction Release of signal peptides from bacterial membrane prolipoproteins. Hydrolyzes -Xaa-Yaa-Zaa-|-(S,diacylglyceryl)Cys-, in which Xaa is hydrophobic (preferably Leu), and Yaa (Ala or Ser) and Zaa (Gly or Ala) have small, neutral side chains.. Its pathway is protein modification; lipoprotein biosynthesis (signal peptide cleavage). This protein specifically catalyzes the removal of signal peptides from prolipoproteins. The protein is Lipoprotein signal peptidase of Helicobacter pylori (strain Shi470).